We begin with the raw amino-acid sequence, 401 residues long: Nicotinate phosphoribosyltransferase (401 aa).

His-224 is modified (phosphohistidine; by autocatalysis).

It belongs to the NAPRTase family. In terms of processing, transiently phosphorylated on a His residue during the reaction cycle. Phosphorylation strongly increases the affinity for substrates and increases the rate of nicotinate D-ribonucleotide production. Dephosphorylation regenerates the low-affinity form of the enzyme, leading to product release.

It catalyses the reaction nicotinate + 5-phospho-alpha-D-ribose 1-diphosphate + ATP + H2O = nicotinate beta-D-ribonucleotide + ADP + phosphate + diphosphate. The protein operates within cofactor biosynthesis; NAD(+) biosynthesis; nicotinate D-ribonucleotide from nicotinate: step 1/1. Catalyzes the synthesis of beta-nicotinate D-ribonucleotide from nicotinate and 5-phospho-D-ribose 1-phosphate at the expense of ATP. In Pseudomonas putida (strain ATCC 47054 / DSM 6125 / CFBP 8728 / NCIMB 11950 / KT2440), this protein is Nicotinate phosphoribosyltransferase.